We begin with the raw amino-acid sequence, 619 residues long: MPHYRSRTSTHGRNMAGARALWRATGMKDGDFGKPIIAVVNSFTQFVPGHVHLRDLGALVAREIEAAGGVAKEFNTIAVDDGIAMGHGGMLYSLPSRELIADSVEYMVNAHCADAMVCISNCDKITPGMLMAAMRLNIPVVFVSGGPMEAGKITSPVDGKVIAKLDLVDAMIKAADPNVSDAEAEEVERSACPTCGSCSGMFTANSMNCLTEAIGLALPGNGTIVATHAWRKGLFEQAGRLVVELCRRYYEQDDASVLPRSIATKSAFENAMTLDVAMGGSTNTVLHLLAAAQEAGVDFTMSDIDRISRRVPCLCKAAPATDKYHIEDVHRAGGILGILGELGRADLLDLSCGNVHSGTLGEAINQWDINGGAGEAAQKFFRAAPGGIPTTVAFSQDATFLTLDMDRQTGCIRDKAHAYSQDGGLAVLYGNLAEKGCIVKTAGVDESQWVFTGRARVFESQEDAVEGILGDRVQAGDVVIIRYEGPKGGPGMQEMLYPTSYLKSKGLGKTCALFTDGRFSGGSSGLVIGHASPEAAEGGTIGLVEEGDTIEIDIPNRRIHLAVGDTVLAERRAAMQARGEQAWQPVDRERVVSQALRAYAALATSADRGAVRDLSQLKR.

Asp81 contacts Mg(2+). Cys122 lines the [2Fe-2S] cluster pocket. Mg(2+) contacts are provided by Asp123 and Lys124. Residue Lys124 is modified to N6-carboxylysine. Cys198 serves as a coordination point for [2Fe-2S] cluster. Glu494 contributes to the Mg(2+) binding site. Catalysis depends on Ser520, which acts as the Proton acceptor.

It belongs to the IlvD/Edd family. Homodimer. It depends on [2Fe-2S] cluster as a cofactor. Requires Mg(2+) as cofactor.

It catalyses the reaction (2R)-2,3-dihydroxy-3-methylbutanoate = 3-methyl-2-oxobutanoate + H2O. It carries out the reaction (2R,3R)-2,3-dihydroxy-3-methylpentanoate = (S)-3-methyl-2-oxopentanoate + H2O. Its pathway is amino-acid biosynthesis; L-isoleucine biosynthesis; L-isoleucine from 2-oxobutanoate: step 3/4. It participates in amino-acid biosynthesis; L-valine biosynthesis; L-valine from pyruvate: step 3/4. In terms of biological role, functions in the biosynthesis of branched-chain amino acids. Catalyzes the dehydration of (2R,3R)-2,3-dihydroxy-3-methylpentanoate (2,3-dihydroxy-3-methylvalerate) into 2-oxo-3-methylpentanoate (2-oxo-3-methylvalerate) and of (2R)-2,3-dihydroxy-3-methylbutanoate (2,3-dihydroxyisovalerate) into 2-oxo-3-methylbutanoate (2-oxoisovalerate), the penultimate precursor to L-isoleucine and L-valine, respectively. In Bordetella pertussis (strain Tohama I / ATCC BAA-589 / NCTC 13251), this protein is Dihydroxy-acid dehydratase 1.